Here is a 275-residue protein sequence, read N- to C-terminus: ADP-dependent (S)-NAD(P)H-hydrate dehydratase (275 aa).

Residues Thr5–Tyr273 enclose the YjeF C-terminal domain. Positions 40, 103, and 151 each coordinate (6S)-NADPHX. Residue Gly214 coordinates AMP. Residue Asp215 participates in (6S)-NADPHX binding.

Belongs to the NnrD/CARKD family. As to quaternary structure, homotetramer. Requires Mg(2+) as cofactor.

It catalyses the reaction (6S)-NADHX + ADP = AMP + phosphate + NADH + H(+). The enzyme catalyses (6S)-NADPHX + ADP = AMP + phosphate + NADPH + H(+). Catalyzes the dehydration of the S-form of NAD(P)HX at the expense of ADP, which is converted to AMP. Together with NAD(P)HX epimerase, which catalyzes the epimerization of the S- and R-forms, the enzyme allows the repair of both epimers of NAD(P)HX, a damaged form of NAD(P)H that is a result of enzymatic or heat-dependent hydration. The protein is ADP-dependent (S)-NAD(P)H-hydrate dehydratase of Lactococcus lactis subsp. lactis (strain IL1403) (Streptococcus lactis).